The following is a 611-amino-acid chain: Rho-related BTB domain-containing protein 3 (611 aa).

Positions 1–175 (MSIHIVALGN…KELGATYLEL (175 aa)) are rho-like. 2 BTB domains span residues 254–356 (VDVV…QWEE) and 420–487 (ADVV…CPAG). The interaction with Rab9 stretch occupies residues 420–611 (ADVVFEIQGA…HSRKCRCLVM (192 aa)).

As to quaternary structure, interacts with RAB9A and RAB9B (at lower level compared to RAB9A-binding). Interacts with M6PRBP1/TIP47.

Its subcellular location is the golgi apparatus. In terms of biological role, rab9-regulated ATPase required for endosome to Golgi transport. Involved in transport vesicle docking at the Golgi complex, possibly by participating in release M6PRBP1/TIP47 from vesicles to permit their efficient docking and fusion at the Golgi. Specifically binds Rab9, but not other Rab proteins. Has low intrinsic ATPase activity due to autoinhibition, which is relieved by Rab9. The protein is Rho-related BTB domain-containing protein 3 (Rhobtb3) of Mus musculus (Mouse).